The primary structure comprises 304 residues: Chromo domain-containing protein cec-1 (304 aa).

The Chromo domain maps to 8-66 (YTVESILEHRKKKGKSEFYIKWLGYDHTHNSWEPKENIVDPTLIEAFFTREAARKAEIK). Residues 63-73 (AEIKAKKDKMA) are compositionally biased toward basic and acidic residues. 2 disordered regions span residues 63-235 (AEIK…EIQL) and 248-304 (VEPA…AIIE). The span at 75–102 (GKKGASSKASASVSKASASTPARGAKAA) shows a compositional bias: low complexity. The span at 106 to 116 (PPKKSPPKRQR) shows a compositional bias: basic residues. Residues 122 to 141 (IRPDSDTDEEHSSADKKSKA) are compositionally biased toward basic and acidic residues. Acidic residues-rich tracts occupy residues 142–152 (EDEEEVEDDEE), 163–204 (EEPE…DVQL), and 212–233 (EEEEEKVEEKKEEEEEEEEEEI). The span at 248–292 (VEPAVATPEPSEPSSSEKAVVENGSSSAAAGNSASKPEVSAVEVV) shows a compositional bias: low complexity. A compositionally biased stretch (acidic residues) spans 293–304 (TVEDDDDIAIIE).

The protein resides in the nucleus. The protein localises to the chromosome. The chain is Chromo domain-containing protein cec-1 (cec-1) from Caenorhabditis elegans.